We begin with the raw amino-acid sequence, 144 residues long: Large ribosomal subunit protein uL13 (144 aa).

This sequence belongs to the universal ribosomal protein uL13 family. In terms of assembly, part of the 50S ribosomal subunit.

This protein is one of the early assembly proteins of the 50S ribosomal subunit, although it is not seen to bind rRNA by itself. It is important during the early stages of 50S assembly. The chain is Large ribosomal subunit protein uL13 from Lachnoclostridium phytofermentans (strain ATCC 700394 / DSM 18823 / ISDg) (Clostridium phytofermentans).